A 156-amino-acid chain; its full sequence is Endoribonuclease YbeY (156 aa).

The Zn(2+) site is built by histidine 111, histidine 115, and histidine 121.

The protein belongs to the endoribonuclease YbeY family. Zn(2+) is required as a cofactor.

It localises to the cytoplasm. Functionally, single strand-specific metallo-endoribonuclease involved in late-stage 70S ribosome quality control and in maturation of the 3' terminus of the 16S rRNA. The protein is Endoribonuclease YbeY of Hahella chejuensis (strain KCTC 2396).